A 278-amino-acid polypeptide reads, in one-letter code: Mediator of RNA polymerase II transcription subunit 18 (278 aa).

It belongs to the Mediator complex subunit 18 family. In terms of assembly, component of the Mediator complex.

It is found in the nucleus. Its function is as follows. Component of the Mediator complex, a coactivator involved in the regulated transcription of nearly all RNA polymerase II-dependent genes. Mediator functions as a bridge to convey information from gene-specific regulatory proteins to the basal RNA polymerase II transcription machinery. Mediator is recruited to promoters by direct interactions with regulatory proteins and serves as a scaffold for the assembly of a functional preinitiation complex with RNA polymerase II and the general transcription factors. This is Mediator of RNA polymerase II transcription subunit 18 (srb5) from Aspergillus clavatus (strain ATCC 1007 / CBS 513.65 / DSM 816 / NCTC 3887 / NRRL 1 / QM 1276 / 107).